A 147-amino-acid polypeptide reads, in one-letter code: Acidic phospholipase A2 S7-48J (147 aa).

The signal sequence occupies residues 1 to 19; that stretch reads MYPAHLLVLLAVCVSLLGA. Positions 20-27 are excised as a propeptide; it reads SDIPPQPL. Cystine bridges form between Cys38–Cys99, Cys54–Cys146, Cys56–Cys72, Cys71–Cys127, Cys78–Cys120, Cys88–Cys113, and Cys106–Cys118. The Ca(2+) site is built by Tyr55, Gly57, and Gly59. Residue His75 is part of the active site. Asp76 is a binding site for Ca(2+). Asp121 is an active-site residue.

Belongs to the phospholipase A2 family. Group I subfamily. D49 sub-subfamily. It depends on Ca(2+) as a cofactor. Expressed by the venom gland.

The protein resides in the secreted. It catalyses the reaction a 1,2-diacyl-sn-glycero-3-phosphocholine + H2O = a 1-acyl-sn-glycero-3-phosphocholine + a fatty acid + H(+). In terms of biological role, snake venom phospholipase A2 (PLA2) that inhibits collagen-induced platelet aggregation. PLA2 catalyzes the calcium-dependent hydrolysis of the 2-acyl groups in 3-sn-phosphoglycerides. This chain is Acidic phospholipase A2 S7-48J, found in Austrelaps superbus (Lowland copperhead snake).